The following is a 392-amino-acid chain: ADP-ribosylhydrolase ARH1 (392 aa).

Mg(2+) contacts are provided by Ser-79, Asp-80, and Asp-81. Lys-109 is a binding site for substrate. The segment at 125 to 127 (IQT) is substrate. Gly-159 provides a ligand contact to substrate. 3 substrate regions span residues 192-194 (HNN), 309-311 (FSG), and 315-316 (SS). The Mg(2+) site is built by Asp-348, Asp-350, and Ser-351.

The protein belongs to the ADP-ribosylglycohydrolase family. In terms of assembly, monomer. Requires Mg(2+) as cofactor.

The enzyme catalyses N(omega)-(ADP-D-ribosyl)-L-arginyl-[protein] + H2O = ADP-D-ribose + L-arginyl-[protein]. Specifically acts as an arginine mono-ADP-ribosylhydrolase by mediating the removal of mono-ADP-ribose attached to arginine residues on proteins. The polypeptide is ADP-ribosylhydrolase ARH1 (adprh) (Dictyostelium discoideum (Social amoeba)).